The primary structure comprises 96 residues: Putative septation protein SpoVG (96 aa).

This sequence belongs to the SpoVG family.

Functionally, essential for sporulation. Interferes with or is a negative regulator of the pathway leading to asymmetric septation. This Priestia megaterium (Bacillus megaterium) protein is Putative septation protein SpoVG.